The chain runs to 530 residues: Bifunctional purine biosynthesis protein PurH (530 aa).

The region spanning 1–148 (MNNARPIHRA…KNHKDVAIVV (148 aa)) is the MGS-like domain.

Belongs to the PurH family.

The catalysed reaction is (6R)-10-formyltetrahydrofolate + 5-amino-1-(5-phospho-beta-D-ribosyl)imidazole-4-carboxamide = 5-formamido-1-(5-phospho-D-ribosyl)imidazole-4-carboxamide + (6S)-5,6,7,8-tetrahydrofolate. The enzyme catalyses IMP + H2O = 5-formamido-1-(5-phospho-D-ribosyl)imidazole-4-carboxamide. Its pathway is purine metabolism; IMP biosynthesis via de novo pathway; 5-formamido-1-(5-phospho-D-ribosyl)imidazole-4-carboxamide from 5-amino-1-(5-phospho-D-ribosyl)imidazole-4-carboxamide (10-formyl THF route): step 1/1. It participates in purine metabolism; IMP biosynthesis via de novo pathway; IMP from 5-formamido-1-(5-phospho-D-ribosyl)imidazole-4-carboxamide: step 1/1. The chain is Bifunctional purine biosynthesis protein PurH from Vibrio cholerae serotype O1 (strain ATCC 39541 / Classical Ogawa 395 / O395).